A 132-amino-acid polypeptide reads, in one-letter code: Large-conductance mechanosensitive channel (132 aa).

The next 3 membrane-spanning stretches (helical) occupy residues 14–34 (VVDL…VSSL), 38–58 (IITP…LHFG), and 67–87 (GNFI…FMFV).

The protein belongs to the MscL family. In terms of assembly, homopentamer.

The protein localises to the cell membrane. Channel that opens in response to stretch forces in the membrane lipid bilayer. May participate in the regulation of osmotic pressure changes within the cell. The chain is Large-conductance mechanosensitive channel from Bacillus cereus (strain B4264).